The following is a 427-amino-acid chain: Inward rectifier potassium channel 2 (427 aa).

The Cytoplasmic portion of the chain corresponds to 1-81 (MGSVRTNRYS…IFTTCVDIRW (81 aa)). At cysteine 76 the chain carries S-nitrosocysteine. A helical membrane pass occupies residues 82–106 (RWMLVIFCLAFVLSWLFFGCVFWLI). Residues 107–128 (ALLHGDLDASKESKACVSEVNS) are Extracellular-facing. The segment at residues 129-140 (FTAAFLFSIETQ) is an intramembrane region (helical; Pore-forming). The segment at residues 141–147 (TTIGYGF) is an intramembrane region (pore-forming). The Selectivity filter motif lies at 142–147 (TIGYGF). Residues 148–156 (RCVTDECPV) lie on the Extracellular side of the membrane. A helical membrane pass occupies residues 157–178 (AVFMVVFQSIVGCIIDAFIIGA). Residues 179-427 (VMAKMAKPKK…PRPLRRESEI (249 aa)) are Cytoplasmic-facing. The segment at 181–208 (AKMAKPKKRNETLVFSHNAVIAMRDGKL) is polyphosphoinositide (PIP2)-binding. The interval 384 to 427 (SKEEDDSENGVPESTSTDTPPDLDLHNQASVPLEPRPLRRESEI) is disordered. Positions 425–427 (SEI) match the PDZ-binding motif.

It belongs to the inward rectifier-type potassium channel (TC 1.A.2.1) family. KCNJ2 subfamily. In terms of assembly, homotetramer. Homomultimeric and heteromultimeric association with KCNJ4/Kir2.3. Can form heteromeric channels with Kir2.6/KCNJ18. Associates, via its PDZ-recognition domain, with a complex containing LIN7A, LIN7B, LIN7C, DLG1, CASK and APBA1. Post-translationally, S-nitrosylation increases the open probability and inward rectifying currents.

It localises to the cell membrane. The protein localises to the sarcolemma. Its subcellular location is the T-tubule. It catalyses the reaction K(+)(in) = K(+)(out). Its activity is regulated as follows. Activated by phosphatidylinositol 4,5 biphosphate (PtdIns(4,5)P2). Functionally, inward rectifier potassium channels are characterized by a greater tendency to allow potassium to flow into the cell rather than out of it. Their voltage dependence is regulated by the concentration of extracellular potassium; as external potassium is raised, the voltage range of the channel opening shifts to more positive voltages. The inward rectification is mainly due to the blockage of outward current by internal magnesium. Blocked by external barium or cesium. Probably participates in establishing action potential waveform and excitability of neuronal and muscle tissues. This is Inward rectifier potassium channel 2 (KCNJ2) from Canis lupus familiaris (Dog).